The chain runs to 515 residues: Sugar transport protein MST4 (515 aa).

The Cytoplasmic portion of the chain corresponds to 1–17 (MAGGFSVSGSGVEFEAK). A helical membrane pass occupies residues 18–38 (ITPIVIISCIMAATGGLMFGY). Residues 39-78 (DVGISGGVTSMDDFLREFFPTVLKKKHEDKESNYCKYDNQ) lie on the Extracellular side of the membrane. A helical membrane pass occupies residues 79–99 (GLQLFTSSLYLAGLTATFFAS). The Cytoplasmic portion of the chain corresponds to 100–108 (YTTRRLGRR). The chain crosses the membrane as a helical span at residues 109–129 (LTMLIAGVFFIVGVIFNGAAQ). At 130–138 (NLAMLIVGR) the chain is on the extracellular side. Residues 139–159 (ILLGCGVGFANQAVPLFLSEI) traverse the membrane as a helical segment. Over 160–165 (APTRIR) the chain is Cytoplasmic. The helical transmembrane segment at 166 to 186 (GGLNILFQLNVTIGILFANLV) threads the bilayer. The Extracellular portion of the chain corresponds to 187 to 199 (NYGTAKIHPWGWR). A helical membrane pass occupies residues 200–220 (LSLSLAGIPAALLTLGALFVV). Residues 221 to 280 (DTPNSLIERGRLEEGKAVLRKIRGTDNVEPEFNEIVEASRVAQEVKHPFRNLLQRRNRPQ) lie on the Cytoplasmic side of the membrane. Residues 281 to 301 (LVIAVLLQIFQQFTGINAIMF) form a helical membrane-spanning segment. The Extracellular segment spans residues 302 to 315 (YAPVLFNTLGFKTD). Residues 316–336 (ASLYSAVITGAVNVLSTLVSV) traverse the membrane as a helical segment. The Cytoplasmic segment spans residues 337-347 (YSVDRVGRRML). A helical membrane pass occupies residues 348 to 368 (LLEAGVQMFLSQVAIAVVLGI). Residues 369-379 (KVTDRSDNLGH) are Extracellular-facing. A helical membrane pass occupies residues 380–400 (GWAIMVVVMVCTFVSSFAWSW). Residues 401–422 (GPLGWLIPSETFPLETRSAGQS) lie on the Cytoplasmic side of the membrane. The helical transmembrane segment at 423–443 (VTVCVNLLFTFVIAQAFLSML) threads the bilayer. Residues 444 to 448 (CHLKY) are Extracellular-facing. A helical transmembrane segment spans residues 449 to 469 (AIFAFFSAWVVVMSLFVLFFL). Residues 470–515 (PETKNIPIEEMTERVWKQHWFWKRFMDDADKHHVVPNGGKSNGATV) are Cytoplasmic-facing.

The protein belongs to the major facilitator superfamily. Sugar transporter (TC 2.A.1.1) family. In terms of tissue distribution, expressed in roots, shoots, leaf blades, leaf sheaths, anthers, ovaries and embryos.

It is found in the membrane. In terms of biological role, mediates active uptake of hexoses by sugar:proton symport. Can transport glucose, fructose, mannose and galactose. Can transport xylose and ribose. The chain is Sugar transport protein MST4 from Oryza sativa subsp. japonica (Rice).